Here is a 212-residue protein sequence, read N- to C-terminus: External core antigen (212 aa).

Positions 1–19 (MQLFHLCLIISCSCPTVQA) are cleaved as a signal peptide. An HBEAG region spans residues 25-27 (GWL). Residues 165 to 212 (NAPILSTLPETTVVRRRGRSPRRRTPSPRRRRSQSPRRRRSQSRESQC) form a disordered region. Residues 178–205 (VRRRGRSPRRRTPSPRRRRSQSPRRRRS) are compositionally biased toward basic residues. One copy of the 1; half-length repeat lies at 184 to 190 (SPRRRTP). The tract at residues 184–206 (SPRRRTPSPRRRRSQSPRRRRSQ) is 3 X 8 AA repeats of S-P-R-R-R-R-S-Q. Positions 184 to 212 (SPRRRTPSPRRRRSQSPRRRRSQSRESQC) are excised as a propeptide. Repeat copies occupy residues 191 to 198 (SPRRRRSQ) and 199 to 206 (SPRRRRSQ).

The protein belongs to the orthohepadnavirus precore antigen family. In terms of assembly, homodimerizes. Post-translationally, phosphorylated. Cleaved by host furin.

The protein localises to the secreted. It is found in the host nucleus. Functionally, may regulate immune response to the intracellular capsid in acting as a T-cell tolerogen, by having an immunoregulatory effect which prevents destruction of infected cells by cytotoxic T-cells. This immune regulation may predispose to chronicity during perinatal infections and prevent severe liver injury during adult infections. The protein is External core antigen of Homo sapiens (Human).